We begin with the raw amino-acid sequence, 164 residues long: Neurotrophin-3 (164 aa).

An N-terminal signal peptide occupies residues 1 to 3; the sequence is IQS. The propeptide occupies 4-120; the sequence is TNMDQQGSLT…ALNRTSRRKR (117 aa). A glycan (N-linked (GlcNAc...) asparagine) is linked at Asn113.

It belongs to the NGF-beta family.

It is found in the secreted. Its function is as follows. Seems to promote the survival of visceral and proprioceptive sensory neurons. This is Neurotrophin-3 (NTF3) from Sanzinia madagascariensis (Madagascar tree boa).